The following is a 313-amino-acid chain: MLARNNSLVTEFILAGLTDHPEFQQPLFFLFLVVYIVTMVGNLGLIILFGLNSHLHTPMYYFLFNLSFIDLCYSSVFTPKMLMNFVSKKNIISYVGCMTQLFFFLFFVISECYMLTSMAYDRYVAICNPLLYKVTMSHQVCSMLTFAAYIMGLAGATAHTGCMLRLTFCSANIINHYLCDILPLLQLSCTSTYVNEVVVLIVVGINIMVPSCTILISYVFIVTSILHIKSTQGRSKAFSTCSSHVIALSLFFGSAAFMYIKYSSGSMEQGKVSSVFYTNVVPMLNPLIYSLRNKDVKVALRKALIKIQRRNIF.

Over 1–25 (MLARNNSLVTEFILAGLTDHPEFQQ) the chain is Extracellular. Residue Asn-5 is glycosylated (N-linked (GlcNAc...) asparagine). Residues 26–46 (PLFFLFLVVYIVTMVGNLGLI) traverse the membrane as a helical segment. Topologically, residues 47 to 54 (ILFGLNSH) are cytoplasmic. The chain crosses the membrane as a helical span at residues 55 to 75 (LHTPMYYFLFNLSFIDLCYSS). Residues 76 to 99 (VFTPKMLMNFVSKKNIISYVGCMT) are Extracellular-facing. An intrachain disulfide couples Cys-97 to Cys-189. Residues 100-120 (QLFFFLFFVISECYMLTSMAY) form a helical membrane-spanning segment. Residues 121-139 (DRYVAICNPLLYKVTMSHQ) are Cytoplasmic-facing. A helical membrane pass occupies residues 140 to 160 (VCSMLTFAAYIMGLAGATAHT). The Extracellular portion of the chain corresponds to 161-197 (GCMLRLTFCSANIINHYLCDILPLLQLSCTSTYVNEV). Residues 198 to 217 (VVLIVVGINIMVPSCTILIS) form a helical membrane-spanning segment. Over 218 to 237 (YVFIVTSILHIKSTQGRSKA) the chain is Cytoplasmic. The helical transmembrane segment at 238 to 258 (FSTCSSHVIALSLFFGSAAFM) threads the bilayer. Topologically, residues 259–270 (YIKYSSGSMEQG) are extracellular. Residues 271–291 (KVSSVFYTNVVPMLNPLIYSL) traverse the membrane as a helical segment. Over 292–313 (RNKDVKVALRKALIKIQRRNIF) the chain is Cytoplasmic.

Belongs to the G-protein coupled receptor 1 family.

The protein resides in the cell membrane. Its function is as follows. Odorant receptor. This Homo sapiens (Human) protein is Olfactory receptor 8B3 (OR8B3).